A 342-amino-acid chain; its full sequence is UDP-3-O-(3-hydroxymyristoyl)glucosamine N-acyltransferase (342 aa).

The Proton acceptor role is filled by His-239.

The protein belongs to the transferase hexapeptide repeat family. LpxD subfamily. Homotrimer.

The enzyme catalyses a UDP-3-O-[(3R)-3-hydroxyacyl]-alpha-D-glucosamine + a (3R)-hydroxyacyl-[ACP] = a UDP-2-N,3-O-bis[(3R)-3-hydroxyacyl]-alpha-D-glucosamine + holo-[ACP] + H(+). It carries out the reaction UDP-3-O-[(3R)-3-hydroxytetradecanoyl]-alpha-D-glucosamine + (3R)-hydroxytetradecanoyl-[ACP] = UDP-2-N,3-O-bis[(3R)-3-hydroxytetradecanoyl]-alpha-D-glucosamine + holo-[ACP] + H(+). It participates in glycolipid biosynthesis; lipid IV(A) biosynthesis; lipid IV(A) from (3R)-3-hydroxytetradecanoyl-[acyl-carrier-protein] and UDP-N-acetyl-alpha-D-glucosamine: step 3/6. Catalyzes the N-acylation of UDP-3-O-(hydroxytetradecanoyl)glucosamine using 3-hydroxytetradecanoyl-ACP as the acyl donor. Is involved in the biosynthesis of lipid A, a phosphorylated glycolipid that anchors the lipopolysaccharide to the outer membrane of the cell. This is UDP-3-O-(3-hydroxymyristoyl)glucosamine N-acyltransferase from Photorhabdus laumondii subsp. laumondii (strain DSM 15139 / CIP 105565 / TT01) (Photorhabdus luminescens subsp. laumondii).